Reading from the N-terminus, the 536-residue chain is Arylsulfatase (536 aa).

Aspartate 13, aspartate 14, and cysteine 51 together coordinate Ca(2+). Cysteine 51 (nucleophile) is an active-site residue. A 3-oxoalanine (Cys) modification is found at cysteine 51. Histidine 115 is an active-site residue. The Ca(2+) site is built by aspartate 317 and asparagine 318.

This sequence belongs to the sulfatase family. In terms of assembly, monomer. Requires Ca(2+) as cofactor. In terms of processing, the conversion to 3-oxoalanine (also known as C-formylglycine, FGly), of a serine or cysteine residue in prokaryotes and of a cysteine residue in eukaryotes, is critical for catalytic activity.

The protein resides in the cytoplasm. The enzyme catalyses an aryl sulfate + H2O = a phenol + sulfate + H(+). Its function is as follows. Hydrolyzes the bond between sulfate and the aromatic ring in a compound such as 4-nitrocatechol sulfate. In Pseudomonas aeruginosa (strain ATCC 15692 / DSM 22644 / CIP 104116 / JCM 14847 / LMG 12228 / 1C / PRS 101 / PAO1), this protein is Arylsulfatase (atsA).